A 244-amino-acid polypeptide reads, in one-letter code: MTAVVNIAAYKFVSIANPADLREPMLEQAGQRQLKGTVLLAPEGINLFLAGAADAIEGFLRWLRADARFADLQAKYSESARMPFRKLLVKVKREIIRMDHPAIRPEAGRAPAVDAATLRRWLAQGRDDQGRELVMLDTRNAFEVEVGTFRGALDWRIERFTQFPQAVRDNQAALAGKTVVSFCTGGIRCEKAAIYMAEAGIEHVYQLEGGILKYFEETDGAGFDGACFVFDERVALDAALAPQA.

In terms of domain architecture, Rhodanese spans 129–219 (QGRELVMLDT…GILKYFEETD (91 aa)). Cysteine 183 acts as the Cysteine persulfide intermediate in catalysis.

This sequence belongs to the TrhO family.

The enzyme catalyses uridine(34) in tRNA + AH2 + O2 = 5-hydroxyuridine(34) in tRNA + A + H2O. In terms of biological role, catalyzes oxygen-dependent 5-hydroxyuridine (ho5U) modification at position 34 in tRNAs. This Bordetella bronchiseptica (strain ATCC BAA-588 / NCTC 13252 / RB50) (Alcaligenes bronchisepticus) protein is tRNA uridine(34) hydroxylase.